Consider the following 47-residue polypeptide: STKNGRDSNAQRLGVKKYGGETVKPGNILIRQRGTKIYPGHNVGMGK.

Residues 1 to 21 (STKNGRDSNAQRLGVKKYGGE) form a disordered region.

It belongs to the bacterial ribosomal protein bL27 family.

It is found in the plastid. The protein localises to the chloroplast. This Porphyridium purpureum (Red alga) protein is Large ribosomal subunit protein bL27c (rpl27).